Here is a 194-residue protein sequence, read N- to C-terminus: CD-NTase-associated protein 15 (194 aa).

The segment at 1–73 is required for cell toxicity; that stretch reads MRMWELLPSK…DYLKHKFCPD (73 aa). 2 consecutive transmembrane segments (helical) span residues 15 to 35 and 43 to 63; these read ISTI…GQPV and ITTI…YFYI.

It belongs to the CBASS Cap15 membrane effector family. The beta barrel domain oligomerizes; in the presence of cyclic nucleotides (probably 3',3'-cGAMP, but the cognate CD-NTase makes at least 4 other cyclic nucleotides) higher-level oligomers are detected.

The protein localises to the cell inner membrane. In terms of biological role, effector protein of a CBASS antivirus system. CBASS (cyclic oligonucleotide-based antiphage signaling system) provides immunity against bacteriophages. The CD-NTase protein (CdnB) synthesizes cyclic nucleotides in response to infection; these serve as specific second messenger signals. The signals activate a diverse range of effectors, leading to bacterial cell death and thus abortive phage infection. Causes cell death in response to 3',3'-cGAMP upon coexpression in E.coli with V.cholerae DncV; inactivating DncV prevents cell death. Upon induction in E.coli with non-cognate DncV, the cell inner membrane shrinks and separates from the cell wall with a concomitant increase in the periplasm. Binds cyclic nucleotide second messenger 3',3'-cGAMP, probably oligomerizing, and induces cell membrane shrinkage and rupture, leading to cell death. A type I CBASS system. Its function is as follows. Protects E.coli against phage infection. When the CBASS operon (cdnB-cap15) is introduced in E.coli MG1655 there is about 100-fold protection against phage T2 and about 10-fold protection against phage T5 and T6. This chain is CD-NTase-associated protein 15, found in Escherichia albertii.